The following is a 470-amino-acid chain: Monocarboxylate transporter 4 (470 aa).

The Cytoplasmic segment spans residues 1-17 (MGGAVVDEGPTGIKAPD). Residues 18–38 (GGWGWAVLFGCFIITGFSYAF) traverse the membrane as a helical segment. Residues 39 to 61 (PKAVSVFFKELMHEFGIGYSDTA) lie on the Extracellular side of the membrane. Residues 62-82 (WISSILLAMLYGTGPLCSVCV) form a helical membrane-spanning segment. Topologically, residues 83–84 (NR) are cytoplasmic. The chain crosses the membrane as a helical span at residues 85 to 105 (FGCRPVMLVGGLFASLGMVAA). Residues 106–109 (SFCR) lie on the Extracellular side of the membrane. Residues 110-130 (SIIQIYLTTGVITGLGLALNF) form a helical membrane-spanning segment. Topologically, residues 131-149 (QPSLIMLNRYFNKRRPIAN) are cytoplasmic. A helical membrane pass occupies residues 150 to 170 (GLAAAGSPVFLCALSPLGQLL). Residues 171 to 179 (QDHYGWRGG) lie on the Extracellular side of the membrane. The helical transmembrane segment at 180–200 (FLILGGLLLNCCVCAALMRPL) threads the bilayer. The Cytoplasmic portion of the chain corresponds to 201 to 231 (VAPQVGGGTEPRGPQRPPQRLLDLSVFRDRG). The helical transmembrane segment at 232–252 (FLIYAVAASIMVLGLFVPPVF) threads the bilayer. Topologically, residues 253-267 (VVSYAKDMGVPDTKA) are extracellular. The helical transmembrane segment at 268–288 (AFLLTILGFIDIFARPTAGFI) threads the bilayer. The Cytoplasmic segment spans residues 289 to 298 (TGLKKVRPYS). A helical membrane pass occupies residues 299 to 319 (VYLFSFAMFFNGFTDLTGSTA). The Extracellular segment spans residues 320-321 (TD). Residues 322–342 (YGGLVVFCIFFGISYGMVGAL) form a helical membrane-spanning segment. Topologically, residues 343–355 (QFEVLMAIVGTQK) are cytoplasmic. Residues 356 to 376 (FSSAIGLVLLLEAVAVLIGPP) form a helical membrane-spanning segment. Residues 377–391 (SGGKLLDATKVYKYV) lie on the Extracellular side of the membrane. The helical transmembrane segment at 392–412 (FILAGAEVLTSSLVLLLGNFF) threads the bilayer. Residues 413-470 (CIGKRKRPEVTEPEEVASEEKLHKPPVDVGVDSREVEHFLKAEPEKNGEVVHTPETSV) lie on the Cytoplasmic side of the membrane. Basolateral sorting signal stretches follow at residues 429-446 (ASEEKLHKPPVDVGVDSR) and 446-470 (REVEHFLKAEPEKNGEVVHTPETSV). S430 bears the Phosphoserine mark. Phosphothreonine is present on T465. S469 is modified (phosphoserine).

This sequence belongs to the major facilitator superfamily. Monocarboxylate porter (TC 2.A.1.13) family. In terms of assembly, interacts with BSG; interaction mediates SLC16A3 targeting to the plasma membrane.

It localises to the cell membrane. The protein resides in the basolateral cell membrane. The catalysed reaction is (S)-lactate(in) + H(+)(in) = (S)-lactate(out) + H(+)(out). The enzyme catalyses pyruvate(out) + H(+)(out) = pyruvate(in) + H(+)(in). Proton-dependent transporter of monocarboxylates such as L-lactate and pyruvate. Plays a predominant role in the L-lactate efflux from highly glycolytic cells. The chain is Monocarboxylate transporter 4 (Slc16a3) from Mus musculus (Mouse).